We begin with the raw amino-acid sequence, 331 residues long: Barley B recombinant-like protein D (331 aa).

Residues 43 to 101 (ALMNDRDNAIRERDHALAEKKAAIAERDMAFTQRDAAMAERNAAVVERDNALAALELAR) are a coiled coil. The tract at residues 51–86 (AIRERDHALAEKKAAIAERDMAFTQRDAAMAERNAA) is alanine-zipper. Residues 104-122 (GLNMNNGNGFPQGSLSGSK) are compositionally biased toward polar residues. 2 disordered regions span residues 104–140 (GLNM…PLQL) and 156–205 (AYPI…VGMS).

The protein belongs to the BBR/BPC family. Homodimer. Heterodimer.

It localises to the nucleus. Functionally, transcriptional regulator that specifically binds to GA-rich elements (GAGA-repeats) present in regulatory sequences of genes involved in developmental processes. The sequence is that of Barley B recombinant-like protein D from Oryza sativa subsp. japonica (Rice).